Reading from the N-terminus, the 167-residue chain is Ubiquitin-fold modifier-conjugating enzyme 1 (167 aa).

C116 (glycyl thioester intermediate) is an active-site residue.

The protein belongs to the ubiquitin-conjugating enzyme family. UFC1 subfamily. In terms of assembly, interacts with UBA5 (via C-terminus). Interacts with UFL1. Interacts with UFM1.

Functionally, E2-like enzyme which specifically catalyzes the second step in ufmylation. Accepts the ubiquitin-like modifier UFM1 from the E1 enzyme UBA5 and forms an intermediate with UFM1 via a thioester linkage. Ufmylation is involved in various processes, such as ribosome recycling, response to DNA damage, interferon response or reticulophagy (also called ER-phagy). The protein is Ubiquitin-fold modifier-conjugating enzyme 1 of Osmerus mordax (Rainbow smelt).